A 181-amino-acid polypeptide reads, in one-letter code: Peptide methionine sulfoxide reductase MsrA (181 aa).

Residue cysteine 14 is part of the active site.

This sequence belongs to the MsrA Met sulfoxide reductase family.

It catalyses the reaction L-methionyl-[protein] + [thioredoxin]-disulfide + H2O = L-methionyl-(S)-S-oxide-[protein] + [thioredoxin]-dithiol. The catalysed reaction is [thioredoxin]-disulfide + L-methionine + H2O = L-methionine (S)-S-oxide + [thioredoxin]-dithiol. Has an important function as a repair enzyme for proteins that have been inactivated by oxidation. Catalyzes the reversible oxidation-reduction of methionine sulfoxide in proteins to methionine. This Bacillus licheniformis (strain ATCC 14580 / DSM 13 / JCM 2505 / CCUG 7422 / NBRC 12200 / NCIMB 9375 / NCTC 10341 / NRRL NRS-1264 / Gibson 46) protein is Peptide methionine sulfoxide reductase MsrA.